The following is a 172-amino-acid chain: WW domain binding protein VOPP1 (172 aa).

The signal sequence occupies residues M1–A22. The Extracellular segment spans residues K23–L60. Residues W61–I81 form a helical membrane-spanning segment. The Cytoplasmic segment spans residues R82 to K172. Positions Q139–K172 are disordered. Pro residues predominate over residues Y151–Y165.

The protein belongs to the VOPP1/ECOP family. In terms of assembly, interacts with WWOX (via WW domain).

It is found in the cytoplasmic vesicle membrane. The protein localises to the late endosome membrane. Its subcellular location is the lysosome membrane. In terms of biological role, increases the transcriptional activity of NFKB1 by facilitating its nuclear translocation, DNA-binding and associated apoptotic response, when overexpressed. May sequester WWOX in lysosomal vesicles and thereby regulate WWOX role as tumor suppressor. The protein is WW domain binding protein VOPP1 of Rattus norvegicus (Rat).